We begin with the raw amino-acid sequence, 362 residues long: MKSSVYQKLEVLVERFEEVQALLSDPATISDQEKFRALSKEFKQLDAVTSVFNNYKSAEDDFSTAELMLKDDDPDMREMAQEEFKDAKKAVADIADELQILLLPRDPNDDNNCFVEIRAGAGGDEAAIFAGDLFRMYSRYAEKKGWKIEVMNSNESEQGGYKELIMKVNGEGVFGHMKFESGGHRVQRVPATESQGRVHTSACTVVVMPEIPEADAIEINKADLKVDTFRASGAGGQHVNKTDSAIRITHIPTGVVVECQEQRSQHKNRAQAMSVLQARLQQAEDEKRRSEEESSRRNLVASGDRSERIRTYNFPQGRMSDHRINLTLYRLNEIMEGSLQLVMEPIMQENQADLLAELAEQH.

Residue glutamine 237 is modified to N5-methylglutamine. The tract at residues 279–305 (RLQQAEDEKRRSEEESSRRNLVASGDR) is disordered. Basic and acidic residues predominate over residues 282–296 (QAEDEKRRSEEESSR).

It belongs to the prokaryotic/mitochondrial release factor family. Methylated by PrmC. Methylation increases the termination efficiency of RF1.

It localises to the cytoplasm. Peptide chain release factor 1 directs the termination of translation in response to the peptide chain termination codons UAG and UAA. This is Peptide chain release factor 1 from Colwellia psychrerythraea (strain 34H / ATCC BAA-681) (Vibrio psychroerythus).